Here is a 118-residue protein sequence, read N- to C-terminus: Putative pterin-4-alpha-carbinolamine dehydratase (118 aa).

It belongs to the pterin-4-alpha-carbinolamine dehydratase family.

It carries out the reaction (4aS,6R)-4a-hydroxy-L-erythro-5,6,7,8-tetrahydrobiopterin = (6R)-L-erythro-6,7-dihydrobiopterin + H2O. The sequence is that of Putative pterin-4-alpha-carbinolamine dehydratase from Xanthomonas euvesicatoria pv. vesicatoria (strain 85-10) (Xanthomonas campestris pv. vesicatoria).